Consider the following 269-residue polypeptide: Probable membrane transporter protein YfcA (269 aa).

The Periplasmic portion of the chain corresponds to 1–7; sequence METFNSL. A helical transmembrane segment spans residues 8-28; sequence FMVSPLLLGVLFFVAMLAGFI. Over 29 to 30 the chain is Cytoplasmic; the sequence is DS. Residues 31–51 form a helical membrane-spanning segment; the sequence is IAGGGGLLTIPALMAAGMSPA. Residues 52-84 are Periplasmic-facing; sequence NALATNKLQACGGSISATIYFIRRKVVSLSDQK. The chain crosses the membrane as a helical span at residues 85 to 105; sequence LNIAMTFVGSMSGALLVQYVQ. Over 106–111 the chain is Cytoplasmic; sequence ADVLRQ. A helical membrane pass occupies residues 112–132; it reads ILPILVICIGLYFLLMPKLGE. Over 133 to 156 the chain is Periplasmic; the sequence is EDRQRRMYGLPFALIAGGCVGFYD. Residues 157 to 177 form a helical membrane-spanning segment; that stretch reads GFFGPAAGSFYALAFVTLCGF. Residues 178–197 lie on the Cytoplasmic side of the membrane; it reads NLAKATAHAKLLNATSNIGG. Residues 198–218 traverse the membrane as a helical segment; that stretch reads LLLFILGGKVIWATGFVMLVG. Over 219–269 the chain is Periplasmic; it reads QFLGARMGSRLVLSKGQKLIRPMIVIVSAVMSAKLLYDSHGQEILHWLGMN.

It belongs to the 4-toluene sulfonate uptake permease (TSUP) (TC 2.A.102) family.

It is found in the cell inner membrane. The polypeptide is Probable membrane transporter protein YfcA (yfcA) (Escherichia coli O157:H7).